The primary structure comprises 504 residues: Maturase K (504 aa).

The protein belongs to the intron maturase 2 family. MatK subfamily.

The protein localises to the plastid. Its subcellular location is the chloroplast. In terms of biological role, usually encoded in the trnK tRNA gene intron. Probably assists in splicing its own and other chloroplast group II introns. This is Maturase K from Simmondsia chinensis (Jojoba).